A 343-amino-acid chain; its full sequence is Nicotianamine synthase 3 (343 aa).

This sequence belongs to the nicotianamine synthase (NAS)-like family. In terms of tissue distribution, expressed in leaves.

The catalysed reaction is 3 S-adenosyl-L-methionine = nicotianamine + 3 S-methyl-5'-thioadenosine + 3 H(+). In terms of biological role, synthesizes nicotianamine, a polyamine that is the first intermediate in the synthesis of the phytosiderophores of the mugineic acid type found in gramineae which serve as a sensor for the physiological iron status within the plant, and/or might be involved in the transport of iron. This is Nicotianamine synthase 3 (NAS3) from Oryza sativa subsp. indica (Rice).